We begin with the raw amino-acid sequence, 699 residues long: Endoplasmic reticulum mannosyl-oligosaccharide 1,2-alpha-mannosidase (699 aa).

Topologically, residues 1 to 84 (MAACEGRRSG…WKQLSRLQRN (84 aa)) are cytoplasmic. Residues 85–105 (MILFLLAFLLFCGLLFYINLA) traverse the membrane as a helical; Signal-anchor for type II membrane protein segment. The Lumenal portion of the chain corresponds to 106–699 (DHWKALAFRL…AHPLPIWTPA (594 aa)). The disordered stretch occupies residues 125–243 (IAGLKPANPP…LPPARTQGTP (119 aa)). A compositionally biased stretch (basic and acidic residues) spans 176 to 201 (DLKDGTQEEATKRQEAPVDPRPEGDP). Residue glutamate 330 is the Proton donor of the active site. Aspartate 463 is a catalytic residue. Cysteine 527 and cysteine 556 are joined by a disulfide. The Proton donor role is filled by glutamate 570. Glutamate 599 is an active-site residue. Ca(2+) is bound at residue threonine 688.

The protein belongs to the glycosyl hydrolase 47 family. The cofactor is Ca(2+). As to expression, widely expressed.

Its subcellular location is the endoplasmic reticulum membrane. The catalysed reaction is N(4)-(alpha-D-Man-(1-&gt;2)-alpha-D-Man-(1-&gt;2)-alpha-D-Man-(1-&gt;3)-[alpha-D-Man-(1-&gt;2)-alpha-D-Man-(1-&gt;3)-[alpha-D-Man-(1-&gt;2)-alpha-D-Man-(1-&gt;6)]-alpha-D-Man-(1-&gt;6)]-beta-D-Man-(1-&gt;4)-beta-D-GlcNAc-(1-&gt;4)-beta-D-GlcNAc)-L-asparaginyl-[protein] (N-glucan mannose isomer 9A1,2,3B1,2,3) + 4 H2O = N(4)-(alpha-D-Man-(1-&gt;3)-[alpha-D-Man-(1-&gt;3)-[alpha-D-Man-(1-&gt;6)]-alpha-D-Man-(1-&gt;6)]-beta-D-Man-(1-&gt;4)-beta-D-GlcNAc-(1-&gt;4)-beta-D-GlcNAc)-L-asparaginyl-[protein] (N-glucan mannose isomer 5A1,2) + 4 beta-D-mannose. It carries out the reaction N(4)-(alpha-D-Man-(1-&gt;2)-alpha-D-Man-(1-&gt;2)-alpha-D-Man-(1-&gt;3)-[alpha-D-Man-(1-&gt;3)-[alpha-D-Man-(1-&gt;2)-alpha-D-Man-(1-&gt;6)]-alpha-D-Man-(1-&gt;6)]-beta-D-Man-(1-&gt;4)-beta-D-GlcNAc-(1-&gt;4)-beta-D-GlcNAc)-L-asparaginyl-[protein] (N-glucan mannose isomer 8A1,2,3B1,3) + 3 H2O = N(4)-(alpha-D-Man-(1-&gt;3)-[alpha-D-Man-(1-&gt;3)-[alpha-D-Man-(1-&gt;6)]-alpha-D-Man-(1-&gt;6)]-beta-D-Man-(1-&gt;4)-beta-D-GlcNAc-(1-&gt;4)-beta-D-GlcNAc)-L-asparaginyl-[protein] (N-glucan mannose isomer 5A1,2) + 3 beta-D-mannose. The protein operates within protein modification; protein glycosylation. Its activity is regulated as follows. Inhibited by both 1-deoxymannojirimycin (dMNJ) and kifunensine. Functionally, involved in glycoprotein quality control targeting of misfolded glycoproteins for degradation. It primarily trims a single alpha-1,2-linked mannose residue from Man(9)GlcNAc(2) to produce Man(8)GlcNAc(2), but at high enzyme concentrations, as found in the ER quality control compartment (ERQC), it further trims the carbohydrates to Man(5-6)GlcNAc(2). The chain is Endoplasmic reticulum mannosyl-oligosaccharide 1,2-alpha-mannosidase (MAN1B1) from Homo sapiens (Human).